Consider the following 899-residue polypeptide: Alanine--tRNA ligase, chloroplastic/mitochondrial (899 aa).

Residues histidine 581, histidine 585, cysteine 683, and histidine 687 each contribute to the Zn(2+) site.

The protein belongs to the class-II aminoacyl-tRNA synthetase family. As to quaternary structure, monomer. Requires Zn(2+) as cofactor.

Its subcellular location is the plastid. It is found in the chloroplast. The protein localises to the mitochondrion. It catalyses the reaction tRNA(Ala) + L-alanine + ATP = L-alanyl-tRNA(Ala) + AMP + diphosphate. In terms of biological role, catalyzes the attachment of alanine to tRNA(Ala) in a two-step reaction: alanine is first activated by ATP to form Ala-AMP and then transferred to the acceptor end of tRNA(Ala). Also edits incorrectly charged tRNA(Ala) via its editing domain. In Micromonas pusilla (strain CCMP1545) (Picoplanktonic green alga), this protein is Alanine--tRNA ligase, chloroplastic/mitochondrial.